The primary structure comprises 292 residues: Protoheme IX farnesyltransferase (292 aa).

The next 9 helical transmembrane spans lie at 13–33 (ILFG…QGSI), 35–55 (ILLL…GCVV), 84–104 (VALV…WFGV), 106–126 (GYAF…YSLW), 135–155 (TVIG…AVTH), 161–181 (ALLL…AIAI), 206–226 (IECV…YCFG), 231–251 (FFLI…IIGF), and 263–283 (FFLY…FTYQ).

It belongs to the UbiA prenyltransferase family. Protoheme IX farnesyltransferase subfamily.

The protein resides in the cell inner membrane. The enzyme catalyses heme b + (2E,6E)-farnesyl diphosphate + H2O = Fe(II)-heme o + diphosphate. It functions in the pathway porphyrin-containing compound metabolism; heme O biosynthesis; heme O from protoheme: step 1/1. Its function is as follows. Converts heme B (protoheme IX) to heme O by substitution of the vinyl group on carbon 2 of heme B porphyrin ring with a hydroxyethyl farnesyl side group. The sequence is that of Protoheme IX farnesyltransferase from Acinetobacter baumannii (strain AB307-0294).